We begin with the raw amino-acid sequence, 1065 residues long: Valine--tRNA ligase, mitochondrial (1065 aa).

A mitochondrion-targeting transit peptide spans 1–15 (MPHLPLASFRPPLWG). Residues 27-52 (ALCTQPEPHGSPVSRRNREAKQKRLR) are disordered. A compositionally biased stretch (basic and acidic residues) spans 42-52 (RNREAKQKRLR). A 'HIGH' region motif is present at residues 146–156 (PNVTGSLHIGH). The 'KMSKS' region signature appears at 659–663 (KMSKS). Lysine 662 provides a ligand contact to ATP.

This sequence belongs to the class-I aminoacyl-tRNA synthetase family.

It localises to the mitochondrion. It catalyses the reaction tRNA(Val) + L-valine + ATP = L-valyl-tRNA(Val) + AMP + diphosphate. Its function is as follows. Catalyzes the attachment of valine to tRNA(Val) in a two-step reaction: valine is first activated by ATP to form Val-AMP and then transferred to the acceptor end of tRNA(Val). The protein is Valine--tRNA ligase, mitochondrial (Vars2) of Rattus norvegicus (Rat).